A 576-amino-acid chain; its full sequence is Putative export ATP-binding/permease protein RT0691 (576 aa).

The ABC transmembrane type-1 domain maps to 20–303 (LIIVMISLLS…IFELLSEIHL (284 aa)). 6 helical membrane-spanning segments follow: residues 21 to 41 (IIVMISLLSVSASLLLIGSVF), 61 to 81 (ILYICLLIVILSVASFFRSYF), 135 to 155 (FLSFFIRNSVMLIGGITLMFF), 158 to 178 (FKLASIVIVTIPILLVPLIKF), 242 to 262 (ALFFAISIAVIFLTITLIVWI), and 277 to 297 (IISFIYYAIIAGVSSGGIFEL). In terms of domain architecture, ABC transporter spans 336-572 (IEFKNVDFTY…SEIYRNICRE (237 aa)). 371–378 (GRSGAGKS) serves as a coordination point for ATP.

Belongs to the ABC transporter superfamily. Homodimer.

It is found in the cell inner membrane. In terms of biological role, part of an ABC transporter complex. Transmembrane domains (TMD) form a pore in the inner membrane and the ATP-binding domain (NBD) is responsible for energy generation. The chain is Putative export ATP-binding/permease protein RT0691 from Rickettsia typhi (strain ATCC VR-144 / Wilmington).